The primary structure comprises 254 residues: Imidazole glycerol phosphate synthase subunit HisF (254 aa).

Catalysis depends on residues aspartate 11 and aspartate 130.

This sequence belongs to the HisA/HisF family. Heterodimer of HisH and HisF.

The protein resides in the cytoplasm. It catalyses the reaction 5-[(5-phospho-1-deoxy-D-ribulos-1-ylimino)methylamino]-1-(5-phospho-beta-D-ribosyl)imidazole-4-carboxamide + L-glutamine = D-erythro-1-(imidazol-4-yl)glycerol 3-phosphate + 5-amino-1-(5-phospho-beta-D-ribosyl)imidazole-4-carboxamide + L-glutamate + H(+). The protein operates within amino-acid biosynthesis; L-histidine biosynthesis; L-histidine from 5-phospho-alpha-D-ribose 1-diphosphate: step 5/9. In terms of biological role, IGPS catalyzes the conversion of PRFAR and glutamine to IGP, AICAR and glutamate. The HisF subunit catalyzes the cyclization activity that produces IGP and AICAR from PRFAR using the ammonia provided by the HisH subunit. In Solibacter usitatus (strain Ellin6076), this protein is Imidazole glycerol phosphate synthase subunit HisF.